Reading from the N-terminus, the 188-residue chain is Pyridoxal 5'-phosphate synthase subunit PdxT (188 aa).

Residue 47-49 (GES) coordinates L-glutamine. The Nucleophile role is filled by C79. L-glutamine-binding positions include R105 and 134 to 135 (IR). Catalysis depends on charge relay system residues H170 and E172.

The protein belongs to the glutaminase PdxT/SNO family. In terms of assembly, in the presence of PdxS, forms a dodecamer of heterodimers. Only shows activity in the heterodimer.

It catalyses the reaction aldehydo-D-ribose 5-phosphate + D-glyceraldehyde 3-phosphate + L-glutamine = pyridoxal 5'-phosphate + L-glutamate + phosphate + 3 H2O + H(+). The enzyme catalyses L-glutamine + H2O = L-glutamate + NH4(+). Its pathway is cofactor biosynthesis; pyridoxal 5'-phosphate biosynthesis. Catalyzes the hydrolysis of glutamine to glutamate and ammonia as part of the biosynthesis of pyridoxal 5'-phosphate. The resulting ammonia molecule is channeled to the active site of PdxS. The chain is Pyridoxal 5'-phosphate synthase subunit PdxT from Listeria monocytogenes serotype 4b (strain CLIP80459).